The primary structure comprises 99 residues: Nucleoid-associated protein str1598 (99 aa).

This sequence belongs to the YbaB/EbfC family. As to quaternary structure, homodimer.

The protein localises to the cytoplasm. It localises to the nucleoid. In terms of biological role, binds to DNA and alters its conformation. May be involved in regulation of gene expression, nucleoid organization and DNA protection. This is Nucleoid-associated protein str1598 from Streptococcus thermophilus (strain CNRZ 1066).